Consider the following 173-residue polypeptide: Large ribosomal subunit protein uL10 (173 aa).

This sequence belongs to the universal ribosomal protein uL10 family. Part of the ribosomal stalk of the 50S ribosomal subunit. The N-terminus interacts with L11 and the large rRNA to form the base of the stalk. The C-terminus forms an elongated spine to which L12 dimers bind in a sequential fashion forming a multimeric L10(L12)X complex.

Functionally, forms part of the ribosomal stalk, playing a central role in the interaction of the ribosome with GTP-bound translation factors. In Maridesulfovibrio salexigens (strain ATCC 14822 / DSM 2638 / NCIMB 8403 / VKM B-1763) (Desulfovibrio salexigens), this protein is Large ribosomal subunit protein uL10.